A 538-amino-acid chain; its full sequence is Cytochrome P450 18a1 (538 aa).

Residues 24-44 (QHLLMVFLGLLALVTLLQWLV) form a helical membrane-spanning segment. Heme is bound at residue cysteine 466.

It belongs to the cytochrome P450 family. Heme serves as cofactor. In terms of tissue distribution, expressed in body wall (epidermal and muscle cells) and mid- and hind-gut.

The protein localises to the endoplasmic reticulum membrane. It localises to the microsome membrane. Functionally, probably involved in steroid hormones biosynthesis. This chain is Cytochrome P450 18a1 (Cyp18a1), found in Drosophila melanogaster (Fruit fly).